Here is a 90-residue protein sequence, read N- to C-terminus: Interferon alpha-inducible protein 27-like protein 2A (90 aa).

The first 24 residues, 1–24 (MLGTLFGSAIGGALAVAGAPVALA), serve as a signal peptide directing secretion. 2 helical membrane passes run 28 to 48 (FTGT…AAAI) and 67 to 89 (GVLG…VGAL).

The protein belongs to the IFI6/IFI27 family. Homodimer. Interacts with SKP2. Interacts with NR4A1. May interact with BCL2.

It localises to the nucleus inner membrane. May be involved in the interferon-induced negative regulation of the transcriptional activity of NR4A1, NR4A2 and NR4A3 through the enhancement of XPO1-mediated nuclear export of these nuclear receptors. Through the regulation of NR4A1 transcriptional activity, may play a role in the vascular response to injury. The polypeptide is Interferon alpha-inducible protein 27-like protein 2A (Mus musculus (Mouse)).